The primary structure comprises 221 residues: Protein-disulfide oxidoreductase DsbI (221 aa).

The helical transmembrane segment at 27–47 threads the bilayer; the sequence is FLWLLMAVAMGGLIILAHSFF. Cys56 and Cys59 are disulfide-bonded. Transmembrane regions (helical) follow at residues 64–84 and 85–105; these read FAMF…KNII and LKLI…KFSV. Cysteines 128 and 154 form a disulfide. The helical transmembrane segment at 189 to 209 threads the bilayer; the sequence is LAFYEYGAGVPAGVWAMFCTV.

Belongs to the DsbB family. DsbI subfamily. In terms of assembly, interacts with DsbL.

Its subcellular location is the cell inner membrane. Its function is as follows. Required for disulfide bond formation in some proteins. Part of a redox system composed of DsbI and DsbL that mediates formation of an essential disulfide bond in AssT. The sequence is that of Protein-disulfide oxidoreductase DsbI from Lelliottia amnigena (Enterobacter amnigenus).